A 479-amino-acid chain; its full sequence is Poly(A) polymerase catalytic subunit (479 aa).

Active-site residues include Asp-202 and Asp-204. Residues Asp-202, Asp-204, and Asp-253 each coordinate Ca(2+).

Belongs to the poxviridae poly(A) polymerase catalytic subunit family. In terms of assembly, heterodimer of a large (catalytic) subunit and a small (regulatory) subunit.

The catalysed reaction is RNA(n) + ATP = RNA(n)-3'-adenine ribonucleotide + diphosphate. Polymerase that creates the 3'-poly(A) tail of mRNA's. This is Poly(A) polymerase catalytic subunit (OPG063) from Bos taurus (Bovine).